A 167-amino-acid chain; its full sequence is Ribosome maturation factor RimM (167 aa).

Residues 94 to 165 enclose the PRC barrel domain; the sequence is ENEYYYSDII…TIRITPMEGL (72 aa).

It belongs to the RimM family. As to quaternary structure, binds ribosomal protein uS19.

It localises to the cytoplasm. Its function is as follows. An accessory protein needed during the final step in the assembly of 30S ribosomal subunit, possibly for assembly of the head region. Essential for efficient processing of 16S rRNA. May be needed both before and after RbfA during the maturation of 16S rRNA. It has affinity for free ribosomal 30S subunits but not for 70S ribosomes. This chain is Ribosome maturation factor RimM, found in Staphylococcus haemolyticus (strain JCSC1435).